Reading from the N-terminus, the 172-residue chain is Small ribosomal subunit protein uS5 (172 aa).

Positions 17–80 (LREKMIAVNR…DEARRKMVKV (64 aa)) constitute an S5 DRBM domain.

It belongs to the universal ribosomal protein uS5 family. In terms of assembly, part of the 30S ribosomal subunit. Contacts proteins S4 and S8.

With S4 and S12 plays an important role in translational accuracy. In terms of biological role, located at the back of the 30S subunit body where it stabilizes the conformation of the head with respect to the body. The polypeptide is Small ribosomal subunit protein uS5 (Ralstonia nicotianae (strain ATCC BAA-1114 / GMI1000) (Ralstonia solanacearum)).